A 173-amino-acid chain; its full sequence is Shikimate kinase (173 aa).

ATP is bound at residue 14-19 (GAGKST). Mg(2+) is bound at residue Ser-18. Residues Asp-36, Arg-60, and Gly-82 each coordinate substrate. An ATP-binding site is contributed by Arg-120. Arg-140 lines the substrate pocket. Gln-157 contributes to the ATP binding site.

The protein belongs to the shikimate kinase family. Monomer. The cofactor is Mg(2+).

The protein localises to the cytoplasm. It carries out the reaction shikimate + ATP = 3-phosphoshikimate + ADP + H(+). Its pathway is metabolic intermediate biosynthesis; chorismate biosynthesis; chorismate from D-erythrose 4-phosphate and phosphoenolpyruvate: step 5/7. Functionally, catalyzes the specific phosphorylation of the 3-hydroxyl group of shikimic acid using ATP as a cosubstrate. In Buchnera aphidicola subsp. Acyrthosiphon pisum (strain APS) (Acyrthosiphon pisum symbiotic bacterium), this protein is Shikimate kinase.